The following is a 252-amino-acid chain: MSGHSKWHTIRRTKGVNDQRRGQLFTKLARDITIATREGGSGDPDLNFRLRLAIEKARANNMPNENIQRAIDRGLGKSNEAALEEIFYEGYGPGGVAILIEAATDNRNRTNSEVRATFNKNGGNPGEPGSVSWMFEQKGLITIDLSAVKHDPDELQLMAIDAGADDVVVDDETLEIYCDWTQLNAIRQALLDQGVPVANAEKIMRAKTLIQPDEKDALAALRLIEKLEDLDDVQKVYSNLDITAELVARFDA.

Positions M1 to K14 are enriched in basic residues. Residues M1 to G22 form a disordered region.

It belongs to the TACO1 family.

The protein resides in the cytoplasm. The protein is Probable transcriptional regulatory protein Caur_1043 of Chloroflexus aurantiacus (strain ATCC 29366 / DSM 635 / J-10-fl).